Here is a 190-residue protein sequence, read N- to C-terminus: Xanthine phosphoribosyltransferase (190 aa).

Xanthine-binding residues include Leu-20 and Asn-27. Ala-128 to Ala-132 contacts 5-phospho-alpha-D-ribose 1-diphosphate. A xanthine-binding site is contributed by Lys-156.

It belongs to the purine/pyrimidine phosphoribosyltransferase family. Xpt subfamily. Homodimer.

The protein localises to the cytoplasm. It carries out the reaction XMP + diphosphate = xanthine + 5-phospho-alpha-D-ribose 1-diphosphate. It participates in purine metabolism; XMP biosynthesis via salvage pathway; XMP from xanthine: step 1/1. Its function is as follows. Converts the preformed base xanthine, a product of nucleic acid breakdown, to xanthosine 5'-monophosphate (XMP), so it can be reused for RNA or DNA synthesis. The polypeptide is Xanthine phosphoribosyltransferase (Clostridium novyi (strain NT)).